Consider the following 141-residue polypeptide: Large ribosomal subunit protein uL11 (141 aa).

This sequence belongs to the universal ribosomal protein uL11 family. As to quaternary structure, part of the ribosomal stalk of the 50S ribosomal subunit. Interacts with L10 and the large rRNA to form the base of the stalk. L10 forms an elongated spine to which L12 dimers bind in a sequential fashion forming a multimeric L10(L12)X complex. One or more lysine residues are methylated.

In terms of biological role, forms part of the ribosomal stalk which helps the ribosome interact with GTP-bound translation factors. In Ruegeria sp. (strain TM1040) (Silicibacter sp.), this protein is Large ribosomal subunit protein uL11.